Reading from the N-terminus, the 213-residue chain is Ras-related protein Rab-4B (213 aa).

Residue Ala2 is modified to N-acetylalanine. Gly18, Thr19, Gly20, Lys21, Ser22, and Cys23 together coordinate GDP. Residues Gly18, Thr19, Gly20, Lys21, Ser22, Cys23, Ser37, His39, and Thr40 each contribute to the GTP site. Mg(2+) is bound at residue Ser22. Residues 39 to 44 (HTIGVE) carry the Switch 1 motif. Residues Thr40 and Asp63 each contribute to the Mg(2+) site. The Switch 2 signature appears at 65 to 74 (AGQERFRSVT). Gly66 contacts GTP. The residue at position 67 (Gln67) is a 5-glutamyl serotonin. Positions 121, 122, 124, 152, and 153 each coordinate GDP. Residues Asn121, Lys122, Asp124, Ala152, and Leu153 each coordinate GTP. Phosphoserine is present on residues Ser185 and Ser193. Residues Cys211 and Cys213 are each lipidated (S-geranylgeranyl cysteine). Cys213 carries the cysteine methyl ester modification.

The protein belongs to the small GTPase superfamily. Rab family. As to quaternary structure, interacts (GTP-bound form) with RUFY1; the interaction allows endosomal tethering and fusion. Mg(2+) is required as a cofactor. In terms of processing, serotonylation of Gln-67 by TGM2 during activation and aggregation of platelets leads to constitutive activation of GTPase activity.

Its subcellular location is the cell membrane. It is found in the early endosome membrane. It catalyses the reaction GTP + H2O = GDP + phosphate + H(+). Regulated by guanine nucleotide exchange factors (GEFs) which promote the exchange of bound GDP for free GTP. Regulated by GTPase activating proteins (GAPs) which increase the GTP hydrolysis activity. Inhibited by GDP dissociation inhibitors (GDIs). In terms of biological role, the small GTPases Rab are key regulators of intracellular membrane trafficking, from the formation of transport vesicles to their fusion with membranes. Rabs cycle between an inactive GDP-bound form and an active GTP-bound form that is able to recruit to membranes different set of downstream effectors directly responsible for vesicle formation, movement, tethering and fusion. RAB4B mediates endosomal tethering and fusion through the interaction with RUFY1 and RAB14. Acts as a regulator of platelet alpha-granule release during activation and aggregation of platelets. The sequence is that of Ras-related protein Rab-4B from Homo sapiens (Human).